The primary structure comprises 523 residues: REST corepressor 2 (523 aa).

Residues 1–43 form a disordered region; the sequence is MPSVMEKPSAGSGILSRSRAKTAPNGGQPHSEDDSSEEEHSHD. The span at 30–43 shows a compositional bias: basic and acidic residues; sequence HSEDDSSEEEHSHD. Residues Ser-31, Ser-35, Ser-36, and Ser-63 each carry the phosphoserine modification. In terms of domain architecture, ELM2 spans 44 to 129; it reads SMIRVGTNYQ…KSLADLANFT (86 aa). Lys-88 is covalently cross-linked (Glycyl lysine isopeptide (Lys-Gly) (interchain with G-Cter in SUMO2)). Positions 130–181 constitute an SANT 1 domain; sequence PFPDEWTVEDKVLFEQAFGFHGKCFQRIQQMLPDKLIPSLVKYYYSWKKTRS. The disordered stretch occupies residues 185–265; it reads VMDRQARRLG…RRRPPKGMYL (81 aa). A Phosphoserine modification is found at Ser-202. Positions 248-260 are enriched in basic residues; it reads YRHHPLRTRRRPP. Residues 283-314 adopt a coiled-coil conformation; it reads TLRGLDSQLISLKRQVQSMKQTNSSLRQALEG. Residues 327 to 378 form the SANT 2 domain; it reads KFNSRWTTDEQLLAVQAIRRYGKDFGAIAEVIGNKTLTQVKTFFVSYRRRFN. The tract at residues 387-523 is disordered; it reads EAEQDGAPTA…AQLEPPAPSL (137 aa). Positions 432 to 459 are enriched in pro residues; the sequence is SVPPAPPPPPPPTSLSQPPPLLRPPLPT. Positions 460 to 482 are enriched in low complexity; it reads APTLLRQPPPLQQGRFLQPRLAP. Residue Arg-479 is modified to Asymmetric dimethylarginine.

This sequence belongs to the CoREST family.

It is found in the nucleus. In terms of biological role, may act as a component of a corepressor complex that represses transcription. The polypeptide is REST corepressor 2 (Rcor2) (Rattus norvegicus (Rat)).